A 244-amino-acid chain; its full sequence is Cell division protein DivIB (244 aa).

The Cytoplasmic portion of the chain corresponds to 1-6 (MKIKWP). The chain crosses the membrane as a helical span at residues 7-27 (LQLWISLAVFVTIAVGTLLLL). The POTRA domain occupies 28–104 (QPWQTIKTVT…IDIAEKVTAG (77 aa)). Residues 28–244 (QPWQTIKTVT…KADNKAHQKQ (217 aa)) are Extracellular-facing.

Belongs to the FtsQ/DivIB family. DivIB subfamily.

The protein resides in the cell membrane. In terms of biological role, cell division protein that may be involved in stabilizing or promoting the assembly of the division complex. This chain is Cell division protein DivIB, found in Leuconostoc kimchii (strain IMSNU 11154 / KCTC 2386 / IH25).